Here is a 155-residue protein sequence, read N- to C-terminus: Ribosomal RNA large subunit methyltransferase H (155 aa).

S-adenosyl-L-methionine contacts are provided by residues Leu73, Gly104, and 123 to 128; that span reads LSPLTL.

This sequence belongs to the RNA methyltransferase RlmH family. Homodimer.

The protein localises to the cytoplasm. It carries out the reaction pseudouridine(1915) in 23S rRNA + S-adenosyl-L-methionine = N(3)-methylpseudouridine(1915) in 23S rRNA + S-adenosyl-L-homocysteine + H(+). Functionally, specifically methylates the pseudouridine at position 1915 (m3Psi1915) in 23S rRNA. The protein is Ribosomal RNA large subunit methyltransferase H of Pseudomonas savastanoi pv. phaseolicola (strain 1448A / Race 6) (Pseudomonas syringae pv. phaseolicola (strain 1448A / Race 6)).